The following is a 415-amino-acid chain: Elongation factor Tu, chloroplastic (415 aa).

The region spanning Lys13 to Arg217 is the tr-type G domain. The tract at residues Gly22–Thr29 is G1. Position 22 to 29 (Gly22 to Thr29) interacts with GTP. Thr29 is a binding site for Mg(2+). The tract at residues Asn63–Tyr67 is G2. The tract at residues Asp84–Gly87 is G3. GTP is bound by residues Asp84–His88 and Asn139–Asp142. Residues Asn139 to Asp142 are G4. Residues Ser177–Leu179 form a G5 region.

It belongs to the TRAFAC class translation factor GTPase superfamily. Classic translation factor GTPase family. EF-Tu/EF-1A subfamily.

It localises to the plastid. Its subcellular location is the chloroplast. It carries out the reaction GTP + H2O = GDP + phosphate + H(+). GTP hydrolase that promotes the GTP-dependent binding of aminoacyl-tRNA to the A-site of ribosomes during protein biosynthesis. In Coleochaete orbicularis (Charophycean green alga), this protein is Elongation factor Tu, chloroplastic (tufA).